The following is a 317-amino-acid chain: tRNA dimethylallyltransferase (317 aa).

Residue glycine 14–threonine 21 participates in ATP binding. Threonine 16–threonine 21 provides a ligand contact to substrate. An interaction with substrate tRNA region spans residues aspartate 39 to glutamine 42.

This sequence belongs to the IPP transferase family. As to quaternary structure, monomer. Mg(2+) is required as a cofactor.

It catalyses the reaction adenosine(37) in tRNA + dimethylallyl diphosphate = N(6)-dimethylallyladenosine(37) in tRNA + diphosphate. Catalyzes the transfer of a dimethylallyl group onto the adenine at position 37 in tRNAs that read codons beginning with uridine, leading to the formation of N6-(dimethylallyl)adenosine (i(6)A). This Bacillus cereus (strain AH187) protein is tRNA dimethylallyltransferase.